We begin with the raw amino-acid sequence, 214 residues long: A-type ATP synthase subunit D (214 aa).

The protein belongs to the V-ATPase D subunit family. In terms of assembly, has multiple subunits with at least A(3), B(3), C, D, E, F, H, I and proteolipid K(x).

The protein localises to the cell membrane. Its function is as follows. Component of the A-type ATP synthase that produces ATP from ADP in the presence of a proton gradient across the membrane. This is A-type ATP synthase subunit D from Thermococcus gammatolerans (strain DSM 15229 / JCM 11827 / EJ3).